We begin with the raw amino-acid sequence, 535 residues long: Endogenous retrovirus group V member 2 Env polyprotein (535 aa).

The first 21 residues, 1–21 (MTEKFLFLYLSLLPMPLLSQA), serve as a signal peptide directing secretion. At 22–321 (QWNENSLVSF…NTTQPRQKRA (300 aa)) the chain is on the extracellular side. N-linked (GlcNAc...) asparagine glycosylation is present at asparagine 68. The chain crosses the membrane as a helical span at residues 322-342 (LGLILAGMGAAIGMIAPWGGF). The Cytoplasmic segment spans residues 343–456 (TYHDVTLRNL…VKSALPSLNW (114 aa)). A helical transmembrane segment spans residues 457–477 (FVPLLGPATVILLLFLFGPCF). The Extracellular segment spans residues 478-535 (FNLLIKCVSSRIKQFHMKSPQMERYQLSVIGGPSTYKHISPLDASGQRFRETMEEFSL).

Belongs to the gamma type-C retroviral envelope protein family. As to expression, expressed in placenta.

It localises to the membrane. This Homo sapiens (Human) protein is Endogenous retrovirus group V member 2 Env polyprotein (ERVV-2).